The chain runs to 222 residues: uncharacterized protein (222 aa).

Residues 43-73 (SQNEEFEYEMERMLSILNEQTMDLTQLQSRI) are a coiled coil.

This is an uncharacterized protein from Rickettsia conorii (strain ATCC VR-613 / Malish 7).